The sequence spans 304 residues: UDP-N-acetylenolpyruvoylglucosamine reductase (304 aa).

The 166-residue stretch at 33-198 (IGGPADLLVM…LEVVLALQEG (166 aa)) folds into the FAD-binding PCMH-type domain. R177 is an active-site residue. S227 (proton donor) is an active-site residue. E297 is an active-site residue.

This sequence belongs to the MurB family. It depends on FAD as a cofactor.

The protein localises to the cytoplasm. The enzyme catalyses UDP-N-acetyl-alpha-D-muramate + NADP(+) = UDP-N-acetyl-3-O-(1-carboxyvinyl)-alpha-D-glucosamine + NADPH + H(+). Its pathway is cell wall biogenesis; peptidoglycan biosynthesis. Functionally, cell wall formation. This Alkaliphilus metalliredigens (strain QYMF) protein is UDP-N-acetylenolpyruvoylglucosamine reductase.